The chain runs to 250 residues: Probable transcriptional regulatory protein RER_29220 (250 aa).

The protein belongs to the TACO1 family.

It is found in the cytoplasm. In Rhodococcus erythropolis (strain PR4 / NBRC 100887), this protein is Probable transcriptional regulatory protein RER_29220.